The chain runs to 798 residues: Cold shock domain-containing protein E1 (798 aa).

Residues 26–87 form the CSD 1 domain; that stretch reads ETGVIEKLLT…RTGKPIAIKL (62 aa). K81 is subject to N6-acetyllysine. K91 participates in a covalent cross-link: Glycyl lysine isopeptide (Lys-Gly) (interchain with G-Cter in SUMO2). S123 is subject to Phosphoserine. The 44-residue stretch at 136 to 179 folds into the CSD 2; truncated domain; it reads VFYLTYTSEDVEGNVQLETGDKINFVIDNNKHTGAVSARNIMLL. The CSD 3 domain maps to 186 to 245; it reads CQGVVCAMKEAFGFIERGDVVKEIFFHYSEFKGDLETLQPGDDVEFTIKDRNGKEVATDV. At S276 the chain carries Phosphoserine. Positions 297–337 constitute a CSD 4; truncated domain; the sequence is LPFGDKDTKSKVTLLEGDHVRFNISTDRRDKLERATNIEVL. 2 consecutive CSD domains span residues 349 to 410 and 447 to 507; these read EMGV…AIRI and NKGK…ATCV. S514 carries the post-translational modification Phosphoserine. A CSD 7 domain is found at 519-579; the sequence is LLGYVATLKD…KGNKVSAEKV (61 aa). S584 bears the Phosphoserine mark. CSD domains are found at residues 610-670 and 674-735; these read PTQI…AYNI and RRAT…ACNV. Residues 748–789 form the SUZ-C domain; sequence PRPDRLVNRLKNITLDDASAPRLMVLRQPRGPDNSMGFGAER. T761 carries the phosphothreonine modification.

This sequence belongs to the UNR family. In terms of assembly, component of a multi subunit autoregulatory ribonucleoprotein complex (ARC), at least composed of IGF2BP1, PABPC1 and CSDE1. Interacts with STRAP. Part of a complex associated with the FOS mCRD domain and consisting of PABPC1, PAIP1, HNRPD and SYNCRIP. The interaction with PABPC1 is direct and RNA-independent. Interacts with EIF4ENIF1/4E-T.

It is found in the cytoplasm. Its subcellular location is the stress granule. The protein resides in the P-body. Its function is as follows. RNA-binding protein involved in translationally coupled mRNA turnover. Implicated with other RNA-binding proteins in the cytoplasmic deadenylation/translational and decay interplay of the FOS mRNA mediated by the major coding-region determinant of instability (mCRD) domain. Required for efficient formation of stress granules. The chain is Cold shock domain-containing protein E1 from Mus musculus (Mouse).